An 86-amino-acid chain; its full sequence is Large ribosomal subunit protein bL31B (86 aa).

Belongs to the bacterial ribosomal protein bL31 family. Type B subfamily. Part of the 50S ribosomal subunit.

The chain is Large ribosomal subunit protein bL31B from Saccharopolyspora erythraea (strain ATCC 11635 / DSM 40517 / JCM 4748 / NBRC 13426 / NCIMB 8594 / NRRL 2338).